A 215-amino-acid chain; its full sequence is UPF0056 membrane protein bbp_248 (215 aa).

A run of 6 helical transmembrane segments spans residues 10-32 (IYISFFFSLFALVNPIGMIPIFT), 52-74 (FSVAIILSISLIFGSFILNLFGI), 78-100 (SFRISGGILVMIIAISMINGNFI), 119-141 (ISIVPLAMPLIAGPGAISSTIVW), 151-169 (IFGCMVTIMLFSCFCWTLF), and 190-207 (IMGLLLMSLGIEFILAGL).

The protein belongs to the UPF0056 (MarC) family.

It localises to the cell membrane. The chain is UPF0056 membrane protein bbp_248 from Buchnera aphidicola subsp. Baizongia pistaciae (strain Bp).